Here is a 179-residue protein sequence, read N- to C-terminus: Interleukin-22 (179 aa).

A signal peptide spans 1 to 33 (MAVLQKSMSFSLMGTLAASCLLLIALWAQEANA). 2 cysteine pairs are disulfide-bonded: C40–C132 and C89–C178. 3 N-linked (GlcNAc...) asparagine glycosylation sites follow: N54, N68, and N97.

This sequence belongs to the IL-10 family.

It localises to the secreted. Cytokine that plays a critical role in modulating tissue responses during inflammation. Plays an essential role in the regeneration of epithelial cells to maintain barrier function after injury and for the prevention of further tissue damage. Unlike most of the cytokines, has no effect on immune cells. Signals through a heterodimeric receptor composed of two subunits, the specific receptor IL22RA1 which is present on non-immune cells in many organs and the shared subunit IL10RB. Ligation of IL22RA1 with IL22 induces activation of the tyrosine kinases JAK1 and TYK2, which in turn activates STAT3. In turn, promotes cell survival and proliferation through STAT3, ERK1/2 and PI3K/AKT pathways. Promotes phosphorylation of GSK3B at 'Ser-9' and CTTN. Promotes epithelial cell spreading. The sequence is that of Interleukin-22 (Il22) from Mus musculus (Mouse).